Consider the following 265-residue polypeptide: Mlc titration factor A (265 aa).

H111, H148, H152, and E211 together coordinate Zn(2+).

This sequence belongs to the MtfA family. In terms of assembly, interacts with Mlc. Zn(2+) is required as a cofactor.

It localises to the cytoplasm. Involved in the modulation of the activity of the glucose-phosphotransferase system (glucose-PTS). Interacts with the transcriptional repressor Mlc, preventing its interaction with DNA and leading to the modulation of expression of genes regulated by Mlc, including ptsG, which encodes the PTS system glucose-specific EIICB component. Its function is as follows. Shows zinc-dependent metallopeptidase activity. The protein is Mlc titration factor A of Salmonella agona (strain SL483).